A 349-amino-acid chain; its full sequence is ATP phosphoribosyltransferase regulatory subunit (349 aa).

Residues 325 to 349 (ANGRGRGVRPRRASARGGRAGTRPR) form a disordered region. A compositionally biased stretch (low complexity) spans 339-349 (ARGGRAGTRPR).

This sequence belongs to the class-II aminoacyl-tRNA synthetase family. HisZ subfamily. Heteromultimer composed of HisG and HisZ subunits.

The protein localises to the cytoplasm. It functions in the pathway amino-acid biosynthesis; L-histidine biosynthesis; L-histidine from 5-phospho-alpha-D-ribose 1-diphosphate: step 1/9. In terms of biological role, required for the first step of histidine biosynthesis. May allow the feedback regulation of ATP phosphoribosyltransferase activity by histidine. This Anaeromyxobacter dehalogenans (strain 2CP-C) protein is ATP phosphoribosyltransferase regulatory subunit.